The chain runs to 507 residues: ESX-5 secretion system ATPase EccB5 (507 aa).

Residues 56-76 traverse the membrane as a helical segment; the sequence is VVASVSAALVICLGSLLWSFI.

Belongs to the EccB family. Part of the ESX-5 / type VII secretion system (T7SS), which is composed of cytosolic and membrane components. The ESX-5 membrane complex is composed of EccB5, EccC5, EccD5 and EccE5.

Its subcellular location is the cell inner membrane. An ATPase. Part of the ESX-5 specialized secretion system, which is responsible for the secretion of EsxN and a number of PE_PGRS and PPE proteins. The protein is ESX-5 secretion system ATPase EccB5 of Mycobacterium marinum (strain ATCC BAA-535 / M).